The primary structure comprises 647 residues: MADVYPVDPAFAADARVTREQYAALYRESIQHPEQFWGKAAQRLEWFKQPTQIKDVSYALDDFHIRWFGDGELNASVNCLDRQLATRGDKTALLFEPDSPDAASYPVTYRELYERVCKLGNALRNLGVKKGDRVTIYLPMIVDAAVAMLACARIGAVHSVVFGGFAANSIADRVIDCQSKLIITADEGLRGGKKIPLKANVDAALKIPGTNTVETVLVVRHTGGAVEMQAPRDRWFHDVVDGQPAACEPERMNAEDPLFILYTSGSTGKPKGVLHTTAGYLLFASYTHEVVFDLREDDIYWCTADVGWVTGHSYIVYGPLANGATAVMFEGVPNYPNVSRFWEVIDKHQVTIFYTAPTAIRALMRDGADPVKKTSRKSLRLLGSVGEPINPEAWRWYYEVVGDSRCPIVDTWWQTETGGILISPLAGAVDLKPGSATLPFFGVQPALVDAEGKILEGATEGNLVLLDSWPGQMRSVYGDHQRFIDTYFRTYPGSYFTGDGCRRDADGYYWITGRVDDVINVSGHRIGTAEVESALVSHPKVAEAAVVGFPHDVKGQGIYAYVTLIAGQTPSEDLHKELVSWVRKEIGPIASPDHLQWAPGLPKTRSGKIMRRILRKIAENAPDQLGDTSTLADPSVVDSLVNERLAR.

CoA-binding positions include 190 to 193, Thr-310, and Asn-334; that span reads RGGK. ATP contacts are provided by residues 386–388, 410–415, Asp-499, and Arg-514; these read GEP and DTWWQT. CoA is bound at residue Ser-522. Arg-525 contacts ATP. Mg(2+)-binding residues include Val-536, His-538, and Val-541. Residue Arg-583 participates in CoA binding. At Lys-608 the chain carries N6-acetyllysine.

It belongs to the ATP-dependent AMP-binding enzyme family. The cofactor is Mg(2+). Acetylated. Deacetylation by the SIR2-homolog deacetylase activates the enzyme.

The catalysed reaction is acetate + ATP + CoA = acetyl-CoA + AMP + diphosphate. Its function is as follows. Catalyzes the conversion of acetate into acetyl-CoA (AcCoA), an essential intermediate at the junction of anabolic and catabolic pathways. AcsA undergoes a two-step reaction. In the first half reaction, AcsA combines acetate with ATP to form acetyl-adenylate (AcAMP) intermediate. In the second half reaction, it can then transfer the acetyl group from AcAMP to the sulfhydryl group of CoA, forming the product AcCoA. This is Acetyl-coenzyme A synthetase from Xanthomonas axonopodis pv. citri (strain 306).